Reading from the N-terminus, the 316-residue chain is Myb-related protein 306 (316 aa).

2 HTH myb-type domains span residues 9–65 and 66–116; these read KIGV…RPGI and KRGD…KKKL. 2 DNA-binding regions (H-T-H motif) span residues 37–61 and 89–112; these read WRAI…TNYL and WAAI…NTHL. Disordered regions lie at residues 119 to 144, 168 to 193, and 209 to 230; these read LQSP…SKGQ, KTSS…QAST, and KKSP…TTTS. Over residues 135–144 the composition is skewed to basic and acidic residues; it reads DSDKSVSKGQ. The segment covering 181 to 193 has biased composition (polar residues); sequence VQTTQPRPFQAST. Low complexity predominate over residues 216–230; it reads SSTSQAGSSESTTTS.

Expressed in flowers, leaves and weakly in seed pods.

Its subcellular location is the nucleus. Transcription factor. This Antirrhinum majus (Garden snapdragon) protein is Myb-related protein 306.